Consider the following 241-residue polypeptide: Large ribosomal subunit protein uL3 (241 aa).

Disordered regions lie at residues 139–166 (VSHRSIGSTGGRQDPGKTFKNKKMPGHM) and 209–241 (KKPLPKDAPKPGKFKVAGDDKVTADAPTEKEGA). Gln-151 is modified (N5-methylglutamine).

This sequence belongs to the universal ribosomal protein uL3 family. As to quaternary structure, part of the 50S ribosomal subunit. Forms a cluster with proteins L14 and L19. Methylated by PrmB.

Its function is as follows. One of the primary rRNA binding proteins, it binds directly near the 3'-end of the 23S rRNA, where it nucleates assembly of the 50S subunit. The sequence is that of Large ribosomal subunit protein uL3 from Nitrobacter hamburgensis (strain DSM 10229 / NCIMB 13809 / X14).